A 757-amino-acid polypeptide reads, in one-letter code: MSWSPSLPTQTCGAWEMKERLGTGGFGNVIRWHNQATGEQIAIKQCRQELSPKNRNRWCLEIQIMRRLNHPNVVAARDVPEGMQNLAPNDLPLLAMEYCQGGDLRRYLNQFENCCGLREGAVLTLLSDIASALRYLHENRIIHRDLKPENIVLQQGEKRLIHKIIDLGYAKELDQGSLCTSFVGTLQYLAPELLEQQKYTVTVDYWSFGTLAFECITGFRPFLPNWQPVQWHSKVRQKSEVDIVVSEDLNGAVKFSSSLPFPNNLNSVLAERLEKWLQLMLMWHPRQRGTDPQYGPNGCFRALDDILNLKLVHVLNMVTGTVHTYPVTEDESLQSLKTRIQENTGILETDQELLQKAGLVLLPDKPATQCISDSKTNEGLTLDMDLVFLLDNSKINYETQITPRPPPESVSCILQEPKRNLSFFQLRKVWGQVWHSIQTLKEDCNRLQQGQRAAMMSLLRNNSCLSKMKNAMASTAQQLKAKLDFFKTSIQIDLEKYKEQTEFGITSDKLLLAWREMEQAVEQCGRENDVKHLVERMMALQTDIVDLQRSPMGRKQGGTLDDLEEQARELYRKLREKPRDQRTEGDSQEMVRLLLQAIQSFEKKVRVIYTQLSKTVVCKQKALELLPKVEEVVSLMNEDERTVVRLQEKRQKELWNLLKIACSKVRGPVSGSPDSMNVSRLSHPGQLMSQPSSACDSLPESDKKSEELVAEAHALCSRLESALQDTVKEQDRSFTTLDWSWLQMEDEERCSLEQACD.

A Protein kinase domain is found at 15–300; sequence WEMKERLGTG…DPQYGPNGCF (286 aa). Residues 21-29 and Lys-44 each bind ATP; that span reads LGTGGFGNV. Asp-145 serves as the catalytic Proton acceptor. Lys-163 participates in a covalent cross-link: Glycyl lysine isopeptide (Lys-Gly) (interchain with G-Cter in ubiquitin). Ser-177 bears the Phosphoserine; by TBK1 and PKC/PRKCZ mark. Cys-179 bears the S-nitrosocysteine mark. The residue at position 181 (Ser-181) is a Phosphoserine; by TBK1, PKC/PRKCZ and PDPK1. A Hydroxyproline modification is found at Pro-191. The interval 458–479 is leucine-zipper; the sequence is LLRNNSCLSKMKNAMASTAQQL. Ser-670 bears the Phosphoserine; by autocatalysis mark. The residue at position 672 (Ser-672) is a Phosphoserine. Phosphoserine; by autocatalysis is present on residues Ser-675, Ser-682, Ser-689, Ser-692, Ser-697, Ser-705, Ser-733, and Ser-740. The tract at residues 683–703 is disordered; it reads HPGQLMSQPSSACDSLPESDK. Positions 737–742 are NEMO-binding; the sequence is LDWSWL.

It belongs to the protein kinase superfamily. Ser/Thr protein kinase family. I-kappa-B kinase subfamily. In terms of assembly, component of the I-kappa-B-kinase (IKK) core complex consisting of CHUK, IKBKB and IKBKG; probably four alpha/CHUK-beta/IKBKB dimers are associated with four gamma/IKBKG subunits. The IKK core complex seems to associate with regulatory or adapter proteins to form a IKK-signalosome holo-complex. The IKK complex associates with TERF2IP/RAP1, leading to promote IKK-mediated phosphorylation of RELA/p65. Part of a complex composed of NCOA2, NCOA3, CHUK/IKKA, IKBKB, IKBKG and CREBBP. Part of a 70-90 kDa complex at least consisting of CHUK/IKKA, IKBKB, NFKBIA, RELA, ELP1 and MAP3K14. Found in a membrane raft complex, at least composed of BCL10, CARD11, DPP4 and IKBKB. Interacts with SQSTM1 through PRKCZ or PRKCI. Forms an NGF-induced complex with IKBKB, PRKCI and TRAF6. May interact with MAVS/IPS1. Interacts with NALP2. Interacts with TICAM1. Interacts with FAF1; the interaction disrupts the IKK complex formation. Interacts with ATM. Part of a ternary complex consisting of TANK, IKBKB and IKBKG. Interacts with NIBP; the interaction is direct. Interacts with ARRB1 and ARRB2. Interacts with TRIM21. Interacts with NLRC5; prevents IKBKB phosphorylation and kinase activity. Interacts with PDPK1. Interacts with EIF2AK2/PKR. The phosphorylated form interacts with PPM1A and PPM1B. Interacts with ZNF268 isoform 2; the interaction is further increased in a TNF-alpha-dependent manner. Interacts with IKBKE. Interacts with ZC3H12A. Interacts with AKAP13. Interacts with LRRC14; disrupts IKBKB-IKBKG interaction preventing I-kappa-B-kinase (IKK) core complex formation and leading to a decrease of IKBKB phosphorylation and NF-kappaB activation. Interacts with SASH1. Interacts with ARFIP2. Interacts with FKBP5. Interacts with kinase TBK1; the complex interacts with STAT1, leading to phosphorylation of STAT1 on 'Thr-748' by IKBKB. In terms of processing, upon cytokine stimulation, phosphorylated on Ser-177 and Ser-181 by MEKK1 and/or MAP3K14/NIK as well as TBK1 and PRKCZ; which enhances activity. Phosphorylated by MAP3K7/TAK1 in response to NOD1 and NOD2 signaling, promoting activation and phosphorylation of NF-kappa-B inhibitors, leading to NF-kappa-B activation. Once activated, autophosphorylates on the C-terminal serine cluster; which decreases activity and prevents prolonged activation of the inflammatory response. Phosphorylated by the IKK-related kinases TBK1 and IKBKE, which is associated with reduced CHUK/IKKA and IKBKB activity and NF-kappa-B-dependent gene transcription. Dephosphorylated at Ser-177 and Ser-181 by PPM1A and PPM1B. Ubiquitinated. Monoubiquitination involves TRIM21 that leads to inhibition of Tax-induced NF-kappa-B signaling. 'Ser-163' may not serve as a monoubiquitination site. Ubiquitination on 'Ser-163' may modulate phosphorylation on C-terminal serine residues. Post-translationally, hydroxylated by PHD1/EGLN2, loss of hydroxylation under hypoxic conditions results in activation of NF-kappa-B. Detected in heart (at protein level). Expressed in liver, kidney and spleen.

The protein resides in the cytoplasm. It localises to the nucleus. It is found in the membrane raft. It carries out the reaction L-seryl-[I-kappa-B protein] + ATP = O-phospho-L-seryl-[I-kappa-B protein] + ADP + H(+). The catalysed reaction is L-seryl-[protein] + ATP = O-phospho-L-seryl-[protein] + ADP + H(+). It catalyses the reaction L-threonyl-[protein] + ATP = O-phospho-L-threonyl-[protein] + ADP + H(+). Functionally, serine kinase that plays an essential role in the NF-kappa-B signaling pathway which is activated by multiple stimuli such as inflammatory cytokines, bacterial or viral products, DNA damages or other cellular stresses. Acts as a part of the canonical IKK complex in the conventional pathway of NF-kappa-B activation. Phosphorylates inhibitors of NF-kappa-B on 2 critical serine residues. These modifications allow polyubiquitination of the inhibitors and subsequent degradation by the proteasome. In turn, free NF-kappa-B is translocated into the nucleus and activates the transcription of hundreds of genes involved in immune response, growth control, or protection against apoptosis. In addition to the NF-kappa-B inhibitors, phosphorylates several other components of the signaling pathway including NEMO/IKBKG, NF-kappa-B subunits RELA and NFKB1, as well as IKK-related kinases TBK1 and IKBKE. IKK-related kinase phosphorylations may prevent the overproduction of inflammatory mediators since they exert a negative regulation on canonical IKKs. Phosphorylates FOXO3, mediating the TNF-dependent inactivation of this pro-apoptotic transcription factor. Also phosphorylates other substrates including NAA10, NCOA3, BCL10 and IRS1. Phosphorylates RIPK1 at 'Ser-25' which represses its kinase activity and consequently prevents TNF-mediated RIPK1-dependent cell death. Phosphorylates the C-terminus of IRF5, stimulating IRF5 homodimerization and translocation into the nucleus. Following bacterial lipopolysaccharide (LPS)-induced TLR4 endocytosis, phosphorylates STAT1 at 'Thr-748' which restricts interferon signaling and anti-inflammatory responses and promotes innate inflammatory responses. IKBKB-mediated phosphorylation of STAT1 at 'Thr-748' promotes binding of STAT1 to the ARID5A promoter, resulting in transcriptional activation of ARID5A and subsequent ARID5A-mediated stabilization of IL6. It also promotes binding of STAT1 to the IL12B promoter and activation of IL12B transcription. The protein is Inhibitor of nuclear factor kappa-B kinase subunit beta (Ikbkb) of Mus musculus (Mouse).